A 106-amino-acid chain; its full sequence is Guanyl-specific ribonuclease Th1 (106 aa).

2 disulfides stabilise this stretch: cysteine 5–cysteine 103 and cysteine 23–cysteine 84. Histidine 39 is an active-site residue. Glutamate 58 serves as the catalytic Proton acceptor. Histidine 92 serves as the catalytic Proton donor.

This sequence belongs to the ribonuclease N1/T1 family.

It carries out the reaction [RNA] containing guanosine + H2O = an [RNA fragment]-3'-guanosine-3'-phosphate + a 5'-hydroxy-ribonucleotide-3'-[RNA fragment].. The sequence is that of Guanyl-specific ribonuclease Th1 from Trichoderma harzianum (Hypocrea lixii).